The sequence spans 564 residues: MTEEIRELIEKFALQNAVKYRSAPNHGAVMGKLMGERPDLRPRAREIAPLITSVLNEIERMSPEQWESRLREMAPELIEEISARKEPAKGLQPLEGAEGGVVMRFAPNPNGPPTLGSARGIIINSEYVKMYGGKFILRFDDTDPVNKRPMIEAYDWYIEDCKWLGAEPHEIVAASQRVEKYYEVAEELIRRGGAYVCLCEQTAFKALKDAAMPCPHRDQTVDENMALWNKMLDGSFQEGEAVLRVKTDIKHKDPAMRDWAGFRIVTKSHPLVGERYRVWPLLDFESAVEDHLLGVTHILRGKDLIDSERRQRYLYDHMGWVYPRVLHWGRVKIFQFGAFSTSKLRKAIEAGEYSGWDDPRLPTVRAMRRRGITAEALRKFMIDLGVGETDISISMDSIYAENRRIVDPIANRRFFVWDPVEIEIKGEVPEVAEAPLHPTIDRGTRRIRAGGRLLLCKEDVAGLAPGSRIRLKDLCNIEIKEIFPLRAELIDLSPETAKRLKLRIIHWAPVEGIPVRVLGPDKTDTGIGEHGISDELDRIVQFERYGFVRIDSVGEEVVAYFAHR.

The 'HIGH' region signature appears at 107-117; the sequence is PNPNGPPTLGS.

This sequence belongs to the class-I aminoacyl-tRNA synthetase family. Glutamate--tRNA ligase type 2 subfamily.

The protein localises to the cytoplasm. The enzyme catalyses tRNA(Glu) + L-glutamate + ATP = L-glutamyl-tRNA(Glu) + AMP + diphosphate. In terms of biological role, catalyzes the attachment of glutamate to tRNA(Glu) in a two-step reaction: glutamate is first activated by ATP to form Glu-AMP and then transferred to the acceptor end of tRNA(Glu). The sequence is that of Glutamate--tRNA ligase from Methanothrix thermoacetophila (strain DSM 6194 / JCM 14653 / NBRC 101360 / PT) (Methanosaeta thermophila).